A 699-amino-acid polypeptide reads, in one-letter code: Keratinocyte proline-rich protein (699 aa).

Ser436 carries the phosphoserine modification. 2 stretches are compositionally biased toward pro residues: residues 448-477 (PYPR…PSPE) and 513-533 (DPCP…PSPE). Positions 448 to 533 (PYPRPEPCPS…PCPEPCPSPE (86 aa)) are disordered.

Expressed in the stratified squamous epithelial layers of the skin, esophagus and tongue.

Its subcellular location is the cytoplasm. The protein is Keratinocyte proline-rich protein (Kprp) of Rattus norvegicus (Rat).